Reading from the N-terminus, the 139-residue chain is MRIMGLDVGSKTVGVAISDPLGFTAQGLEIIQINEDQEEFGFERLGELVAEYKVDKFVIGLPKNMNNTSGPRVEASQAYGAKVTELFGLPVEYQDERLTTVAAERMLIEQADVSRNKRKKVIDKLAAQLILQNYLDRNY.

The protein belongs to the YqgF nuclease family.

The protein resides in the cytoplasm. In terms of biological role, could be a nuclease involved in processing of the 5'-end of pre-16S rRNA. This is Putative pre-16S rRNA nuclease from Streptococcus gordonii (strain Challis / ATCC 35105 / BCRC 15272 / CH1 / DL1 / V288).